A 46-amino-acid chain; its full sequence is METSSPALSIAITILIVLLGLTAFGVYTAFGPPNRALDDPWDDHDD.

The chain crosses the membrane as a helical span at residues 10-30 (IAITILIVLLGLTAFGVYTAF).

Belongs to the PsbN family.

The protein resides in the cellular thylakoid membrane. In terms of biological role, may play a role in photosystem I and II biogenesis. The sequence is that of Protein PsbN from Prochlorococcus marinus (strain SARG / CCMP1375 / SS120).